Reading from the N-terminus, the 619-residue chain is DNA mismatch repair protein MutL (619 aa).

Belongs to the DNA mismatch repair MutL/HexB family.

Its function is as follows. This protein is involved in the repair of mismatches in DNA. It is required for dam-dependent methyl-directed DNA mismatch repair. May act as a 'molecular matchmaker', a protein that promotes the formation of a stable complex between two or more DNA-binding proteins in an ATP-dependent manner without itself being part of a final effector complex. The sequence is that of DNA mismatch repair protein MutL from Xylella fastidiosa (strain M23).